Consider the following 464-residue polypeptide: Ribosomal protein uS12 methylthiotransferase RimO (464 aa).

Positions 14-125 constitute an MTTase N-terminal domain; it reads PTVAFAHLGC…IVEVLQRVEA (112 aa). Residues C23, C59, C88, C163, C167, and C170 each coordinate [4Fe-4S] cluster. The 230-residue stretch at 149 to 378 folds into the Radical SAM core domain; sequence TTDQAVAFLK…MALQQPISAE (230 aa). The TRAM domain occupies 381–452; that stretch reads HSWVSRTVDV…VYDLSGRIVG (72 aa).

It belongs to the methylthiotransferase family. RimO subfamily. It depends on [4Fe-4S] cluster as a cofactor.

It is found in the cytoplasm. It carries out the reaction L-aspartate(89)-[ribosomal protein uS12]-hydrogen + (sulfur carrier)-SH + AH2 + 2 S-adenosyl-L-methionine = 3-methylsulfanyl-L-aspartate(89)-[ribosomal protein uS12]-hydrogen + (sulfur carrier)-H + 5'-deoxyadenosine + L-methionine + A + S-adenosyl-L-homocysteine + 2 H(+). Catalyzes the methylthiolation of an aspartic acid residue of ribosomal protein uS12. The sequence is that of Ribosomal protein uS12 methylthiotransferase RimO from Parasynechococcus marenigrum (strain WH8102).